We begin with the raw amino-acid sequence, 128 residues long: Ferric uptake regulation protein homolog (128 aa).

This sequence belongs to the Fur family.

The protein is Ferric uptake regulation protein homolog of Archaeoglobus fulgidus (strain ATCC 49558 / DSM 4304 / JCM 9628 / NBRC 100126 / VC-16).